Consider the following 221-residue polypeptide: Response regulator protein PmrA (221 aa).

The region spanning R2–T116 is the Response regulatory domain. D51 bears the 4-aspartylphosphate mark. A DNA-binding region (ompR/PhoB-type) is located at residues L124–Q218.

Its subcellular location is the cytoplasm. In terms of biological role, member of the two-component regulatory system PmrA/PmrB that plays a role in the regulation of resistance towards polymyxin B and cationic antimicrobial peptides in response to limiting concentrations of Mg(2+). Functions as a transcriptional activator by direct binding to a cis-acting sequence upstream of the target gene promoters including lipase lipA and pmrH promoters. Also autoregulates its own pmrAB operon under Mg(2+)-limiting conditions. In Pseudomonas aeruginosa (strain ATCC 15692 / DSM 22644 / CIP 104116 / JCM 14847 / LMG 12228 / 1C / PRS 101 / PAO1), this protein is Response regulator protein PmrA (pmrA).